A 120-amino-acid chain; its full sequence is Large ribosomal subunit protein bL19c (120 aa).

The protein belongs to the bacterial ribosomal protein bL19 family.

The protein resides in the plastid. It localises to the chloroplast. The polypeptide is Large ribosomal subunit protein bL19c (Phaeodactylum tricornutum (strain CCAP 1055/1)).